Consider the following 858-residue polypeptide: Heat shock protein 105 kDa (858 aa).

The residue at position 2 (serine 2) is an N-acetylserine. Lysine 471 is subject to N6-acetyllysine. Disordered stretches follow at residues 500 to 585 and 801 to 858; these read KVPT…PPEA and VTQP…MDLD. Residues 504–515 are compositionally biased toward acidic residues; it reads EEEDGSSLEADM. Phosphoserine occurs at positions 509 and 510. Positions 533–549 are enriched in polar residues; the sequence is QQDNSEAGTQPQVQTDG. A Phosphoserine modification is found at serine 558. Threonine 562 carries the phosphothreonine modification. 2 stretches are compositionally biased toward basic and acidic residues: residues 564–585 and 806–815; these read EESK…PPEA and PKIESPKLER. Phosphoserine is present on serine 810. Threonine 816 carries the phosphothreonine modification.

The protein belongs to the heat shock protein 70 family. Interacts with HSPA8/HSC70. Interacts with HSPA1A (via NBD) and HSPA1B (via NBD). Post-translationally, phosphorylation on Ser-509 may be important for regulation of the HSPA8/HSC70 chaperone activity. Expressed in neurons in the cerebrum and Purkinje cells in the cerebellum (at protein level). Expressed in testis and no expression or only low-level expression in liver, spleen, lung, and kidney (at protein level). Highly expressed in the brain and moderately expressed in lung, heart, thymus, spleen, liver, and small intestine.

The protein resides in the cytoplasm. The protein localises to the nucleus. In terms of biological role, acts as a nucleotide-exchange factor (NEF) for chaperone proteins HSPA1A and HSPA1B, promoting the release of ADP from HSPA1A/B thereby triggering client/substrate protein release. Prevents the aggregation of denatured proteins in cells under severe stress, on which the ATP levels decrease markedly. Inhibits HSPA8/HSC70 ATPase and chaperone activities. This Mus musculus (Mouse) protein is Heat shock protein 105 kDa (Hsph1).